A 501-amino-acid polypeptide reads, in one-letter code: Putative matrix metalloproteinase (501 aa).

A signal peptide spans 1–26; the sequence is MMPQYERKQIIIHISCVIICVVVTLT. N-linked (GlcNAc...) asparagine; by host glycosylation is found at asparagine 48, asparagine 58, asparagine 61, asparagine 94, asparagine 116, and asparagine 163. Histidine 179 lines the Zn(2+) pocket. Glutamate 180 is an active-site residue. Residues histidine 183 and histidine 189 each coordinate Zn(2+). N-linked (GlcNAc...) asparagine; by host glycans are attached at residues asparagine 192, asparagine 267, asparagine 280, and asparagine 291. The Hemopexin repeat unit spans residues 311-356; the sequence is TGHIDTISVIRGELYIFVDEYHWRFRSNGLLYSGYPLKTTHSWSVP. N-linked (GlcNAc...) asparagine; by host glycans are attached at residues asparagine 379 and asparagine 493.

This sequence belongs to the peptidase M10A family. Zn(2+) serves as cofactor.

The chain is Putative matrix metalloproteinase from Trichoplusia ni ascovirus 2c (TnAV-2c).